The chain runs to 165 residues: Endoribonuclease YbeY (165 aa).

The Zn(2+) site is built by His130, His134, and His140.

Belongs to the endoribonuclease YbeY family. The cofactor is Zn(2+).

Its subcellular location is the cytoplasm. Its function is as follows. Single strand-specific metallo-endoribonuclease involved in late-stage 70S ribosome quality control and in maturation of the 3' terminus of the 16S rRNA. This is Endoribonuclease YbeY from Streptococcus pneumoniae serotype 2 (strain D39 / NCTC 7466).